The primary structure comprises 2543 residues: Highly reducing polyketide synthase GPY1 (2543 aa).

A Ketosynthase family 3 (KS3) domain is found at 9–435; sequence REPIAIVSMA…GSTAHAVVEF (427 aa). Catalysis depends on for beta-ketoacyl synthase activity residues C182, H318, and H358. The malonyl-CoA:ACP transacylase (MAT) domain stretch occupies residues 574–881; it reads TFTGQGAMWS…PFFATMLRNA (308 aa). Residues 953 to 1089 form an N-terminal hotdog fold region; it reads HEILGSRCRG…GRAAVLETSK (137 aa). Residues 953 to 1253 form a dehydratase (DH) domain region; that stretch reads HEILGSRCRG…GLQMDRATSD (301 aa). Positions 953–1256 constitute a PKS/mFAS DH domain; sequence HEILGSRCRG…MDRATSDDNT (304 aa). Residue H985 is the Proton acceptor; for dehydratase activity of the active site. The interval 1103–1256 is C-terminal hotdog fold; that stretch reads MPLKVPLKSY…MDRATSDDNT (154 aa). Residue D1169 is the Proton donor; for dehydratase activity of the active site. The segment at 1399–1587 is methyltransferase (CMet) domain; sequence NDLLYRFYEE…LDEWRNELAA (189 aa). Residues 1830–2136 are enoyl reductase (ER) domain; it reads GILESLTMAQ…IEGTSNKQVV (307 aa). Positions 2161–2335 are ketoreductase (KR) domain; that stretch reads TYIITGGLGG…ASSVDLGFVE (175 aa). Positions 2464–2541 constitute a Carrier domain; it reads ALQPFVCTAL…DLSARVSRMI (78 aa). At S2501 the chain carries O-(pantetheine 4'-phosphoryl)serine.

Functionally, highly reducing polyketide synthase; part of the gene cluster that mediates the biosynthesis of gibepyrone A, a 2H-pyran-2-one metabolite exhibiting a moderate antimicrobial activity against Gram-positive bacteria and yeasts. The highly reducing polyketide synthase GPY1 is sufficient to produce gibepyrone A. GPY1 uses an acetyl-CoA starter unit, three malonyl-CoA extender units, and two SAM-dependent methylations to establish the gibepyrone A carbon backbone, followed by product release upon intramolecular cyclization. The gibepyrone A derivatives gibepyrones B and D are produced by cluster-independent P450 monooxygenases, probably to protect the fungus from the toxic product. In contrast, the formation of gibepyrones E and F from gibepyrone A is a spontaneous process and independent of enzymatic activity. The polypeptide is Highly reducing polyketide synthase GPY1 (Gibberella fujikuroi (strain CBS 195.34 / IMI 58289 / NRRL A-6831) (Bakanae and foot rot disease fungus)).